The following is a 137-amino-acid chain: Immunoglobulin domain-containing protein oig-1 (137 aa).

The signal sequence occupies residues 1–23 (MFSELRILRDILLLCFLSVGINA). The 93-residue stretch at 41–133 (PKISRSSYFK…KGSRVKKFLT (93 aa)) folds into the Ig-like C2-type domain. An intrachain disulfide couples Cys63 to Cys118.

In terms of tissue distribution, expressed in DD and VD GABAergic motor neurons. Expressed in a subset of head neurons including M2 motor neurons in the pharynx. Expressed in coelomocytes.

The protein localises to the membrane. It localises to the secreted. The protein resides in the extracellular space. Its subcellular location is the cell projection. It is found in the dendrite. The protein localises to the axon. Plays a role in neural development, where it temporally regulates synapse formation in the D-type inhibitory GABAergic motor neurons, dorsal D (DD) and ventral D (VD) motor neurons. Controls the translocation of postsynaptic proteins, such as the acetylcholine receptor subunit acr-12, and presynaptic proteins, such as snb-1, along nerve cords to prevent premature synapse remodeling/formation. The sequence is that of Immunoglobulin domain-containing protein oig-1 from Caenorhabditis elegans.